A 406-amino-acid polypeptide reads, in one-letter code: Putative colanic acid biosynthesis glycosyltransferase WcaL (406 aa).

The protein belongs to the glycosyltransferase group 1 family. Glycosyltransferase 4 subfamily.

The protein operates within slime biogenesis; slime polysaccharide biosynthesis. In Escherichia coli (strain K12), this protein is Putative colanic acid biosynthesis glycosyltransferase WcaL (wcaL).